The following is a 621-amino-acid chain: (-)-beta-phellandrene synthase 1, chloroplastic (621 aa).

The N-terminal 49 residues, 1 to 49 (MALALVSVAPLVSMRRSLFSSPYELKSIDKTIPNLVMCRKRMLGRPSIR), are a transit peptide targeting the chloroplast. The Mg(2+) site is built by D372, D376, and D524. The short motif at 372–376 (DDIYD) is the DDXXD motif element.

Belongs to the terpene synthase family. Tpsd subfamily. The cofactor is Mg(2+). It depends on Mn(2+) as a cofactor.

Its subcellular location is the plastid. It localises to the chloroplast. It carries out the reaction (2E)-geranyl diphosphate = (-)-beta-phellandrene + diphosphate. The protein operates within terpene metabolism; oleoresin biosynthesis. It participates in secondary metabolite biosynthesis; terpenoid biosynthesis. In terms of biological role, monoterpene synthase (TPS) involved in the biosynthesis of monoterpene natural products included in conifer oleoresin secretions and volatile emissions; these compounds contribute to biotic and abiotic stress defense against herbivores and pathogens. Catalyzes the conversion of (2E)-geranyl diphosphate (GPP) to (-)-beta-phellandrene. This Pinus banksiana (Jack pine) protein is (-)-beta-phellandrene synthase 1, chloroplastic.